Here is a 124-residue protein sequence, read N- to C-terminus: Histone H2A (124 aa).

Over residues 1 to 18 (MSGRGKGGKAKGKSKSRS) the composition is skewed to basic residues. A disordered region spans residues 1 to 23 (MSGRGKGGKAKGKSKSRSSRAGL). S2 bears the N-acetylserine mark. S2 carries the phosphoserine modification. The residue at position 104 (Q104) is an N5-methylglutamine.

The protein belongs to the histone H2A family. As to quaternary structure, the nucleosome is a histone octamer containing two molecules each of H2A, H2B, H3 and H4 assembled in one H3-H4 heterotetramer and two H2A-H2B heterodimers. The octamer wraps approximately 147 bp of DNA. In terms of processing, the N-terminal serine is acetylated. That serine is also phosphorylated in approximately 60% of the molecules isolated from erythrocytes.

The protein localises to the nucleus. It is found in the chromosome. In terms of biological role, core component of nucleosome. Nucleosomes wrap and compact DNA into chromatin, limiting DNA accessibility to the cellular machineries which require DNA as a template. Histones thereby play a central role in transcription regulation, DNA repair, DNA replication and chromosomal stability. DNA accessibility is regulated via a complex set of post-translational modifications of histones, also called histone code, and nucleosome remodeling. The polypeptide is Histone H2A (Sipunculus nudus (Sipunculan worm)).